A 240-amino-acid polypeptide reads, in one-letter code: 1-(5-phosphoribosyl)-5-[(5-phosphoribosylamino)methylideneamino] imidazole-4-carboxamide isomerase (240 aa).

Residue Asp10 is the Proton acceptor of the active site. Asp131 functions as the Proton donor in the catalytic mechanism.

Belongs to the HisA/HisF family.

Its subcellular location is the cytoplasm. The enzyme catalyses 1-(5-phospho-beta-D-ribosyl)-5-[(5-phospho-beta-D-ribosylamino)methylideneamino]imidazole-4-carboxamide = 5-[(5-phospho-1-deoxy-D-ribulos-1-ylimino)methylamino]-1-(5-phospho-beta-D-ribosyl)imidazole-4-carboxamide. It participates in amino-acid biosynthesis; L-histidine biosynthesis; L-histidine from 5-phospho-alpha-D-ribose 1-diphosphate: step 4/9. The sequence is that of 1-(5-phosphoribosyl)-5-[(5-phosphoribosylamino)methylideneamino] imidazole-4-carboxamide isomerase from Shouchella clausii (strain KSM-K16) (Alkalihalobacillus clausii).